The sequence spans 414 residues: Protein RecA (414 aa).

78-85 provides a ligand contact to ATP; that stretch reads GPESSGKT. The segment covering 361 to 384 has biased composition (basic and acidic residues); the sequence is QEKAVEALKKEEGSKEDALTGNKD. A disordered region spans residues 361–414; it reads QEKAVEALKKEEGSKEDALTGNKDETDDSAQKNSAASKAKRAEVVGLPADDSLF.

This sequence belongs to the RecA family.

The protein localises to the cytoplasm. Functionally, can catalyze the hydrolysis of ATP in the presence of single-stranded DNA, the ATP-dependent uptake of single-stranded DNA by duplex DNA, and the ATP-dependent hybridization of homologous single-stranded DNAs. It interacts with LexA causing its activation and leading to its autocatalytic cleavage. This Treponema denticola (strain ATCC 35405 / DSM 14222 / CIP 103919 / JCM 8153 / KCTC 15104) protein is Protein RecA.